We begin with the raw amino-acid sequence, 505 residues long: Glycerol kinase (505 aa).

ADP is bound at residue Thr12. ATP-binding residues include Thr12, Thr13, and Ser14. Thr12 contributes to the sn-glycerol 3-phosphate binding site. Residue Arg16 coordinates ADP. Sn-glycerol 3-phosphate-binding residues include Arg82, Glu83, Tyr134, and Asp249. 5 residues coordinate glycerol: Arg82, Glu83, Tyr134, Asp249, and Gln250. Residues Thr271 and Gly315 each contribute to the ADP site. Residues Thr271, Gly315, Gln319, and Gly416 each coordinate ATP. ADP-binding residues include Gly416 and Asn420.

The protein belongs to the FGGY kinase family.

The catalysed reaction is glycerol + ATP = sn-glycerol 3-phosphate + ADP + H(+). It participates in polyol metabolism; glycerol degradation via glycerol kinase pathway; sn-glycerol 3-phosphate from glycerol: step 1/1. With respect to regulation, inhibited by fructose 1,6-bisphosphate (FBP). In terms of biological role, key enzyme in the regulation of glycerol uptake and metabolism. Catalyzes the phosphorylation of glycerol to yield sn-glycerol 3-phosphate. The polypeptide is Glycerol kinase (Mycolicibacterium gilvum (strain PYR-GCK) (Mycobacterium gilvum (strain PYR-GCK))).